Consider the following 325-residue polypeptide: Syntaxin-16 (325 aa).

The Cytoplasmic portion of the chain corresponds to 1–301; that stretch reads MATRRLTDAF…AEQYQKKNRK (301 aa). S41 is modified (phosphoserine). In terms of domain architecture, t-SNARE coiled-coil homology spans 230 to 292; that stretch reads TLMVEERERE…EDGLKQLHKA (63 aa). Residues 302-322 form a helical; Anchor for type IV membrane protein membrane-spanning segment; the sequence is MLVILILFVIIIVLIVVLVGV. The Vesicular portion of the chain corresponds to 323–325; sequence KSR.

It belongs to the syntaxin family. As to quaternary structure, interacts with GCC2. Interacts with BAIAP3; this interaction is increased in the presence of calcium. As to expression, ubiquitous.

The protein resides in the golgi apparatus membrane. It localises to the cytoplasm. SNARE involved in vesicular transport from the late endosomes to the trans-Golgi network. This is Syntaxin-16 (STX16) from Homo sapiens (Human).